The chain runs to 432 residues: Hexane cyclase pydB (432 aa).

The N-terminal stretch at 1–20 (MMHQSLGLGLVVFVAAPVVA) is a signal peptide. N-linked (GlcNAc...) asparagine glycans are attached at residues asparagine 59, asparagine 78, asparagine 153, and asparagine 308.

Belongs to the Diels-Alderase family.

It participates in mycotoxin biosynthesis. Hexane cyclase; part of the gene cluster that mediates the biosynthesis of pyrrocidines, fungal natural products containing a macrocyclic para-cyclophane connected to a decahydrofluorene ring system that show potent antibiotic activities toward Gram-negative bacteria. Within the pathway, pydB functions synergistically with pydE, pydX and pydZ to form the cyclophane. The pathway begins with the PKS-NRPS pydA which, with the help of the trans-enoyl reductase pydC, synthesizes the polyketide-tyrosyl acyl thioester product which can be reductively off-loaded by the terminal reductase (R) domain in pydA. The alpha/beta hydrolase pydG is then required to catalyze the subsequent Knoevenagel condensation that affords the 3-pyrrolin-2-one ring, whereas the four proteins pydB, pydE, pydX and pydZ then function synergistically to form the cyclophane. PydB and the membrane-bound pydX and pydZ are lipid-binding proteins that can sequester and mold the pdyG product into the inverse S-shape. Binding of the medium chain reductase pydE to the complex would trigger the cascade oxidative cyclization. PydY is involved the Diels-Alder cycloaddition that forms the decahydrofluorene core. Additional non-enzymatic hydroxylation yields pyrrocidine A2 which can be further reduced into pyrrocidine B by an endogenous reductase. The sequence is that of Hexane cyclase pydB from Acremonium sp.